The sequence spans 485 residues: Delta(14)-sterol reductase (485 aa).

The next 5 membrane-spanning stretches (helical) occupy residues F18–F38, G77–L97, L131–I151, F155–V175, and S319–F339. Residues K346, R350, L373, W378, and N385–Y386 each bind NADP(+). Residues A431 to I451 form a helical membrane-spanning segment. Residues D457, C461–Y465, and Y472 each bind NADP(+).

This sequence belongs to the ERG4/ERG24 family.

It localises to the membrane. The catalysed reaction is 4,4-dimethyl-5alpha-cholesta-8,24-dien-3beta-ol + NADP(+) = 4,4-dimethyl-5alpha-cholesta-8,14,24-trien-3beta-ol + NADPH + H(+). Its pathway is steroid biosynthesis; zymosterol biosynthesis; zymosterol from lanosterol: step 2/6. Reduces the C14=C15 double bond of 4,4-dimethyl-cholesta-8,14,24-trienol to produce 4,4-dimethyl-cholesta-8,24-dienol. The polypeptide is Delta(14)-sterol reductase (Fusarium vanettenii (Neocosmospora pisi)).